Consider the following 405-residue polypeptide: Replication factor C large subunit (405 aa).

47-54 serves as a coordination point for ATP; sequence GPPGVGKT.

It belongs to the activator 1 small subunits family. RfcL subfamily. Heteromultimer composed of small subunits (RfcS) and large subunits (RfcL).

In terms of biological role, part of the RFC clamp loader complex which loads the PCNA sliding clamp onto DNA. The sequence is that of Replication factor C large subunit from Saccharolobus islandicus (strain M.16.4 / Kamchatka #3) (Sulfolobus islandicus).